Reading from the N-terminus, the 137-residue chain is Fluoride-specific ion channel FluC 2 (137 aa).

A run of 4 helical transmembrane segments spans residues 3-23 (MGGS…SVLG), 44-64 (WGTM…GALA), 76-96 (PWLF…SFSL), and 111-131 (LGNV…GFLL). Residues glycine 86 and threonine 89 each coordinate Na(+).

This sequence belongs to the fluoride channel Fluc/FEX (TC 1.A.43) family.

It is found in the cell inner membrane. The catalysed reaction is fluoride(in) = fluoride(out). Its activity is regulated as follows. Na(+) is not transported, but it plays an essential structural role and its presence is essential for fluoride channel function. Its function is as follows. Fluoride-specific ion channel. Important for reducing fluoride concentration in the cell, thus reducing its toxicity. This Bradyrhizobium diazoefficiens (strain JCM 10833 / BCRC 13528 / IAM 13628 / NBRC 14792 / USDA 110) protein is Fluoride-specific ion channel FluC 2.